A 429-amino-acid polypeptide reads, in one-letter code: Glutamate-1-semialdehyde 2,1-aminomutase 2 (429 aa).

An N6-(pyridoxal phosphate)lysine modification is found at K267.

This sequence belongs to the class-III pyridoxal-phosphate-dependent aminotransferase family. HemL subfamily. In terms of assembly, homodimer. It depends on pyridoxal 5'-phosphate as a cofactor.

Its subcellular location is the cytoplasm. The enzyme catalyses (S)-4-amino-5-oxopentanoate = 5-aminolevulinate. The protein operates within porphyrin-containing compound metabolism; protoporphyrin-IX biosynthesis; 5-aminolevulinate from L-glutamyl-tRNA(Glu): step 2/2. This is Glutamate-1-semialdehyde 2,1-aminomutase 2 (gsaB) from Bacillus subtilis (strain 168).